Here is a 381-residue protein sequence, read N- to C-terminus: Sulfate adenylyltransferase (381 aa).

It belongs to the sulfate adenylyltransferase family.

The enzyme catalyses sulfate + ATP + H(+) = adenosine 5'-phosphosulfate + diphosphate. It functions in the pathway sulfur metabolism; hydrogen sulfide biosynthesis; sulfite from sulfate: step 1/3. This is Sulfate adenylyltransferase from Chloroflexus aurantiacus (strain ATCC 29366 / DSM 635 / J-10-fl).